The following is a 347-amino-acid chain: Large ribosomal subunit protein uL10 (347 aa).

The segment at 312–347 (AAAPAEEEVKKEEEPEEEEEDHAEEDGMAGLGALFG) is disordered. Over residues 325–338 (EPEEEEEDHAEEDG) the composition is skewed to acidic residues.

It belongs to the universal ribosomal protein uL10 family. In terms of assembly, part of the 50S ribosomal subunit. Forms part of the ribosomal stalk which helps the ribosome interact with GTP-bound translation factors. Forms a heptameric L10(L12)2(L12)2(L12)2 complex, where L10 forms an elongated spine to which the L12 dimers bind in a sequential fashion.

In terms of biological role, forms part of the ribosomal stalk, playing a central role in the interaction of the ribosome with GTP-bound translation factors. This chain is Large ribosomal subunit protein uL10, found in Methanosarcina acetivorans (strain ATCC 35395 / DSM 2834 / JCM 12185 / C2A).